Here is a 206-residue protein sequence, read N- to C-terminus: 2,3-bisphosphoglycerate-dependent phosphoglycerate mutase (206 aa).

Substrate-binding positions include 9–16 (RHGQSEWN), 22–23 (TG), arginine 61, 88–91 (ERDY), lysine 99, 115–116 (RR), and 159–160 (GN). Residue histidine 10 is the Tele-phosphohistidine intermediate of the active site. Glutamate 88 functions as the Proton donor/acceptor in the catalytic mechanism.

Belongs to the phosphoglycerate mutase family. BPG-dependent PGAM subfamily. In terms of assembly, homodimer.

The enzyme catalyses (2R)-2-phosphoglycerate = (2R)-3-phosphoglycerate. Its pathway is carbohydrate degradation; glycolysis; pyruvate from D-glyceraldehyde 3-phosphate: step 3/5. In terms of biological role, catalyzes the interconversion of 2-phosphoglycerate and 3-phosphoglycerate. The chain is 2,3-bisphosphoglycerate-dependent phosphoglycerate mutase from Azorhizobium caulinodans (strain ATCC 43989 / DSM 5975 / JCM 20966 / LMG 6465 / NBRC 14845 / NCIMB 13405 / ORS 571).